The primary structure comprises 245 residues: MRYKITIEYNGSSFSGWQKQQHSANSIQETIENAIFNFSGERVSLHCGGRTDTGVHALGQVAHFNMERQFELYRIRNGINYHLKAIPIVVLSAEAVDDAFHARFSAKKRYYEYRIINRYAPAALEIGYVWQVFNPLDVNIMREAARHLLGKHNLSSFRSKDCQATNPVRTIDDIDIVQNGSHIYIKISAISFLHNQVRIIVGTLVEFGKNRTNPQEMLNILSQCKRNAAGITAPPHGLYLVKIDY.

Aspartate 52 serves as the catalytic Nucleophile. Tyrosine 111 provides a ligand contact to substrate.

This sequence belongs to the tRNA pseudouridine synthase TruA family. As to quaternary structure, homodimer.

The catalysed reaction is uridine(38/39/40) in tRNA = pseudouridine(38/39/40) in tRNA. Functionally, formation of pseudouridine at positions 38, 39 and 40 in the anticodon stem and loop of transfer RNAs. This chain is tRNA pseudouridine synthase A, found in Wolbachia pipientis subsp. Culex pipiens (strain wPip).